The primary structure comprises 374 residues: 4-hydroxy-3-methylbut-2-en-1-yl diphosphate synthase (flavodoxin) (374 aa).

Positions 270, 273, 305, and 312 each coordinate [4Fe-4S] cluster.

It belongs to the IspG family. The cofactor is [4Fe-4S] cluster.

The catalysed reaction is (2E)-4-hydroxy-3-methylbut-2-enyl diphosphate + oxidized [flavodoxin] + H2O + 2 H(+) = 2-C-methyl-D-erythritol 2,4-cyclic diphosphate + reduced [flavodoxin]. Its pathway is isoprenoid biosynthesis; isopentenyl diphosphate biosynthesis via DXP pathway; isopentenyl diphosphate from 1-deoxy-D-xylulose 5-phosphate: step 5/6. Functionally, converts 2C-methyl-D-erythritol 2,4-cyclodiphosphate (ME-2,4cPP) into 1-hydroxy-2-methyl-2-(E)-butenyl 4-diphosphate. In Vibrio cholerae serotype O1 (strain ATCC 39315 / El Tor Inaba N16961), this protein is 4-hydroxy-3-methylbut-2-en-1-yl diphosphate synthase (flavodoxin).